Reading from the N-terminus, the 210-residue chain is Probable GTP-binding protein EngB (210 aa).

Residues 25-199 (TGIEVAFAGR…RQKLDSWFNE (175 aa)) enclose the EngB-type G domain. Residues 33–40 (GRSNAGKS), 60–64 (GRTQL), 78–81 (DLPG), 145–148 (TKAD), and 178–180 (FSS) each bind GTP. Mg(2+)-binding residues include serine 40 and threonine 62.

It belongs to the TRAFAC class TrmE-Era-EngA-EngB-Septin-like GTPase superfamily. EngB GTPase family. Mg(2+) serves as cofactor.

In terms of biological role, necessary for normal cell division and for the maintenance of normal septation. This Klebsiella pneumoniae (strain 342) protein is Probable GTP-binding protein EngB.